Here is a 123-residue protein sequence, read N- to C-terminus: UPF0102 protein Csal_2201 (123 aa).

This sequence belongs to the UPF0102 family.

The sequence is that of UPF0102 protein Csal_2201 from Chromohalobacter salexigens (strain ATCC BAA-138 / DSM 3043 / CIP 106854 / NCIMB 13768 / 1H11).